A 119-amino-acid chain; its full sequence is Large ribosomal subunit protein bL20 (119 aa).

This sequence belongs to the bacterial ribosomal protein bL20 family.

In terms of biological role, binds directly to 23S ribosomal RNA and is necessary for the in vitro assembly process of the 50S ribosomal subunit. It is not involved in the protein synthesizing functions of that subunit. This is Large ribosomal subunit protein bL20 from Nitrosococcus oceani (strain ATCC 19707 / BCRC 17464 / JCM 30415 / NCIMB 11848 / C-107).